A 173-amino-acid chain; its full sequence is Crossover junction endodeoxyribonuclease RuvC (173 aa).

Active-site residues include D8, E67, and D139. D8, E67, and D139 together coordinate Mg(2+).

It belongs to the RuvC family. Homodimer which binds Holliday junction (HJ) DNA. The HJ becomes 2-fold symmetrical on binding to RuvC with unstacked arms; it has a different conformation from HJ DNA in complex with RuvA. In the full resolvosome a probable DNA-RuvA(4)-RuvB(12)-RuvC(2) complex forms which resolves the HJ. Mg(2+) is required as a cofactor.

It localises to the cytoplasm. It catalyses the reaction Endonucleolytic cleavage at a junction such as a reciprocal single-stranded crossover between two homologous DNA duplexes (Holliday junction).. Functionally, the RuvA-RuvB-RuvC complex processes Holliday junction (HJ) DNA during genetic recombination and DNA repair. Endonuclease that resolves HJ intermediates. Cleaves cruciform DNA by making single-stranded nicks across the HJ at symmetrical positions within the homologous arms, yielding a 5'-phosphate and a 3'-hydroxyl group; requires a central core of homology in the junction. The consensus cleavage sequence is 5'-(A/T)TT(C/G)-3'. Cleavage occurs on the 3'-side of the TT dinucleotide at the point of strand exchange. HJ branch migration catalyzed by RuvA-RuvB allows RuvC to scan DNA until it finds its consensus sequence, where it cleaves and resolves the cruciform DNA. The protein is Crossover junction endodeoxyribonuclease RuvC of Aliivibrio salmonicida (strain LFI1238) (Vibrio salmonicida (strain LFI1238)).